The chain runs to 402 residues: Indole-3-glycerol phosphate synthase, chloroplastic (402 aa).

The N-terminal 65 residues, 1–65 (MEGLVPVQRL…SDLKESLAVS (65 aa)), are a transit peptide targeting the chloroplast.

Belongs to the TrpC family. Expressed in leaves.

The protein localises to the plastid. The protein resides in the chloroplast. It carries out the reaction 1-(2-carboxyphenylamino)-1-deoxy-D-ribulose 5-phosphate + H(+) = (1S,2R)-1-C-(indol-3-yl)glycerol 3-phosphate + CO2 + H2O. It functions in the pathway amino-acid biosynthesis; L-tryptophan biosynthesis; L-tryptophan from chorismate: step 4/5. Indole-3-glycerol phosphate synthase required for tryptophan biosynthesis. This Arabidopsis thaliana (Mouse-ear cress) protein is Indole-3-glycerol phosphate synthase, chloroplastic.